A 248-amino-acid chain; its full sequence is Pulmonary surfactant-associated protein A (248 aa).

Residues 1 to 20 form the signal peptide; the sequence is MLLCSLTLTLLWMVASGLEC. The Collagen-like domain occupies 28–100; that stretch reads GSPGIPGTPG…PGERGPPGFP (73 aa). The segment at 29 to 102 is disordered; that stretch reads SPGIPGTPGS…ERGPPGFPAY (74 aa). 9 positions are modified to 4-hydroxyproline: Pro-30, Pro-33, Pro-36, Pro-42, Pro-54, Pro-57, Pro-63, Pro-67, and Pro-70. Basic and acidic residues predominate over residues 42 to 51; sequence PGRDGRDGIK. A compositionally biased stretch (pro residues) spans 54 to 65; that stretch reads PGPPGPMGPPGG. Low complexity predominate over residues 69 to 82; it reads LPGRDGMTGAPGLP. Residues 84 to 93 show a composition bias toward basic and acidic residues; it reads ERGEKGEPGE. A C-type lectin domain is found at 132-248; sequence LAVGEKVFST…LQYRLAICEF (117 aa). Cystine bridges form between Cys-155-Cys-246 and Cys-224-Cys-238. Asn-207 carries N-linked (GlcNAc...) asparagine glycosylation. Positions 215, 217, 234, and 235 each coordinate Ca(2+).

It belongs to the SFTPA family. Oligomeric complex of 6 set of homotrimers.

It localises to the secreted. The protein resides in the extracellular space. The protein localises to the extracellular matrix. It is found in the surface film. In terms of biological role, in presence of calcium ions, it binds to surfactant phospholipids and contributes to lower the surface tension at the air-liquid interface in the alveoli of the mammalian lung and is essential for normal respiration. Enhances the expression of MYO18A/SP-R210 on alveolar macrophages. The protein is Pulmonary surfactant-associated protein A (SFTPA1) of Bos taurus (Bovine).